The following is a 110-amino-acid chain: UPF0122 protein SH1678 (110 aa).

It belongs to the UPF0122 family.

Its function is as follows. Might take part in the signal recognition particle (SRP) pathway. This is inferred from the conservation of its genetic proximity to ftsY/ffh. May be a regulatory protein. The polypeptide is UPF0122 protein SH1678 (Staphylococcus haemolyticus (strain JCSC1435)).